The sequence spans 6753 residues: MSENSDEGKMQKGKGNEMNEDKIICKKEESNSSSYKFISFIKTIEDVKEKWKSSNLSRMDVLKLKNDDINNDDNMNNMDNMNNMNNMNNINNMNNMNNINNMNNMNNINNMNNMNNMNNMDNMNNNEKHPCSNNNYSFNNYIKESINYNTCTGYDKNNIMLNFLDKHKKSIFLKSRNNVNTFQSDINSSKTSSFFSCMSLKNMNYHNDINKYSNYRMMKNINGLHKLMILKNKNKDKKLFTNTSDKKNYYCLNNGDHIINEKDSFSDTYISYGCRKRRWKKKKKNIYNMLFYDESINDYPYKNLEKTTFSNSSKIYELFFNKYKKKKILNIECSGNKYKGLLRTNHFPPYANFNFTIRRKLQTSNVLGHFMISKCNFNRTICYRKYIKCVNKYKNNKRNRVINMYVKKENVDSIKGTFGNMNNGVHHNNSRRRLNNTSKNNISNNNNNMLKKKKGKKNYKGSFDQMIQEDTTLDQAKKESIKTVSKNERKNNMNKHSHDNKVSKLNKRMSNKRRNNKNCNPSNDMCNEDDVIEKICTTEEVNDDEKKKKLSRHKKFVCERKKGVILQNNNKCKKKNDDNIINNNNDDVNNCGDNINDHHDNRKDYDTTEDQNKCPKILSINFIKCDEKLFEKIYNDMFLRIGKIVTNKRKKYFLIYKIVKDSFFRILILNTEKLEKNILQVMAVQDVILCDKNVKIYSDPIYIRNNNKLYAIKFLKIFSLKYMKKVKNMSEVNFSDDDECKKENKDNISESSKRSNNIGEKKMLHVEKSEEHDDMTSDSNKEDTKIEEGRKKSNEVNIDVDDGEEEENVNNNDNNNDNNNDNDNSSDNNNNDDGSNDTESCSKINKSKYKGKEKKDVKENTDDKNLSDSNSNNSKKKFKVLNKAIKKDNDKKKKYEKKNIEGNSNNNMILVRSNSSSTSTSNSSSKSKSSNCRNKKNNQISICSKMDEKNSEQKKKNIKKKNKTCNEGKSKKDSTKLNCVKKVKNKSTDKKNGKSKINIKNEKKKKINNSKINKGRKGINKKDKGKGDDNNYVCLIYDDEKKFYFNFKKFKDIINVIKGSDESTRFYVDTNNNNHNNNMKKKMKLFKKVEKSLYLENLDIDTDEILFRRPKFFNCIIEESFENYDINYEGEDGNFYVFKNKLNKIRKKVTIKNETDSSDMYIELKDEEKGFKYIGYRVSFELKKDNKKKAQVKVGIIKYYSPKYKQFFIHHLENYKLYQTSDLSKGNNNNNNNNMKENGFVKCGRNSYSRACSKSLNSSIYINKYKNVELNEKITNIIDDDNNNNINSSCIYKNNLSNENNLCADKVLCDGNYNMLENDVDEMNNVDQNQKKRNDLVFSDVKGWYSPYFYNIKILNNYKEFERFDILEKCDKKKEMTDHVNNTLNKNEICSICSKRILFMKGHDHYSCSLSSAIYDMCSEAEKKEIDENNCIDIYWGIKCFTCEKKYHANCLEDDVLITKWFDKNILMKEYKKFIYKNSLKKEKRYFNNNGKNKRTKNGKKKKNTIHKLEDKNNSHVVSTASNSHSIEVSSSESAKKGNEKNTATCKKRKTSCSALYKKVKKGKNKNGENKNGENKNGDIKNDDIKNDDIKNDDIRNDDDKNDENEENTKECKNESNNIDNNNSSNDSLSDVDNNKDNGKSKNKKYRRCINYIPSVEHSDITYKKFICKDCYRCIYCCESIYDYKQTPNVANYVICKNCNMVAHGSCCFPNVPDIYLFNWKCDDCLKCNKCNYSNLCYINYNEWELHLDCCINCYKEYEKKNFCIMCNEKYDEDDSKKWVQCDVCKFWIHLSCDKNESRNIETLSNKNIDYKCPTCSIGTFHDKIERILYLLFLLDKYKNFTFHVPINYSIYWRIVKIPMNLYIMKKKIWEKKYDTILDFLYDFMLIIHNAKMVHMPNTPIYKNACIFEKKGRVIIKNMFNMTNEYLNKCIEDCVENYKNEINNLDSFQIGHDNNNNNDNNINNNNKMEGVNNESVIFMNDGCNNKLYNKEGTNMTCVNMDSINKNLNDMNNNNNNNNKMEVFCGQNNIKLNEYYINKEGYNIISNDNNMNYDNYNNVQNIGMKKMYTNINDYNSSNVPNESVYNKENFINNSSIYNINENNTYDLNCDKKLIFDNKYNLSAYQNEGDIMNYNGMYQKNINISNPPYNNNNNNNNNMVKEGEKYILNNDDMNNISISKDNDINNNCNNIANIYRKRKLEQYKKDITQYELYELFDFKNDSFFINRNKEMFSCSSNDHNLIDYNILYVKLNGKIYFNTFYDKHDEFDVCKILKVHFLKNNRRGGGNHIMCPKIRNNQNLKEDVTQCDEEKIEQNNDNGCDDEYDNNNNNNNNIGSSSISSINKIHMNDTYNNSINDNSLRHNNNCSVFINSNIFMIDVLNEKVKINNIVKETKRIISPINNVLKFLKCIQIVFFYDNNTNECTEKEKNVISSNLCNNNFEKYVNINSIDHNNMSGEKKRKSVEEIMSVVDNKSYYGFNKCSEYILYSSNEYDRAKKKENKRIKLLKNDILKECCYICGSIEYKNNFIYCCICGISVHYSCANIVHPFLFNLNDYKDHKKEINNILNIITRNFKCDNCIKCDNCLLHFDSSLKHNLYFKLKNLNVSCNNNRMERRTYNYLYDVKIKVFTTNKEGTKQTGKCVMKTKENDIIKLDEDNKQKDELNEANKECFYKQDDVHVEKNCDELLYKNSFNSEECNKNEKKKNDNNVDENDDNVDKNDDNNNNNNNGDDNNNIDNTLVDGDMNKLENDLNNSNDFSINEEKKNNKDTKKYMISSKEEINKEIENVSNQMDNKNNDVDKKKNISNEEIILDNTKNSCHDNDSNVLYNESVKKSFNACKIEKKEGIEKDDNLGHVNKLRNKRLIKILSIREEGNKLVKCFCCGKPSHDECFYIIDNNTYKNKICTLKKTVKNYVRKKNVENKCNTKVEMNSDVILLDDNIKDHCSVNKTGDEHMNNNEFIDISKDKISEHNILDESFNSGVVCSDKNRKDQVVFIDGDVKNNDISIIEENVTYYTSKEVNNNSVLKNERDVESTSELYIGGDKHVYNKLETDNAEMESNNNNNNNNNNSDCNNNVSTLSTAAVNTINRSHMSPQKNDNDMNKINQDDIIHTKMNDKKNVKDDNGNMTNLNNNIDKNDRNLDTILKEHSVIMQKLDELKENRNKEHDGEFYNNLILNNQFLIHSFKVEEGVEINKDSIIINKKMFNKYILNKIYELLDNKKRVRIKDLFNLFNLDEFRCSFILYEVLNALNTYLNEKLKEYNLTKIRNGTYKKYENEIRNENFCLFNKYLIVNNRDKINITKVVLKIQSLITEILSDAMNGNIVDEKDKSKKKESISSDFNVVNNVKEYNIQNGCINIDINNYFKGEYINFKPILCSSQFNLDTNAQIFLQNKANLSMFQKSASYNNNFENNLENNFVNNKMNNMNNMKNNMNNMNNIMNNIMNNNMNNIMNNIMNNNMNNIINNNNIFNNDVSNNVDMQHKSDQICIFNSNNIHSVPIFNNKPYMDNNFNNMVLVNKSNDINGDDILCNMKNLYNKSVCNKQEKNGYSVVHKNICDVNFPYNDTKIWNGDITNKSKTYTYTNINNNGSVIDYRKWSSVNRSVSMNNMNCIRSNTNPRILSGTDHILKNNHMNKRNNVNNTYGVNNVNNVNNVNNTNNVSCFMMRRKIRSNSLHDMNDKMNKMNDNINININNLNIINNNINICNMNYPIDRVDSMNNTFNRNNIIISQNTKENTNILNFNGNDFCNNNNNNNNIINKENNFGTSNFNSPFHVGNLAKSYSYNNTMSEKNMNEVICPNVRNNMSNMNNMNNMNNMNNMNNMNNMNNMNNMDSINNVISYSCTNPNMKDINFNSMRRSSSTPKKSTGLLKNYFNIDIDQYNKTNSHIMNYNVSINNDMNNVYINNNNNHNNNNNNSCNNFINNDVINMNNVGTFYNFNQNAESYNNISNNIKCSNINNIIINNNMNVNNLNYFCNNKEVGFKENDLNINQKVHTINKDPYEMNHSKMYVTFPYCNTKDNNSNKSSLKSNVLRLDKIRNRNIKKPLLYNRSSSMHSSDNLIYNVHNNNRNSPAEFTSDIIINKERNMENNYNTSINYVNNNITNNIIVANNNCYHTANNFIQINYSPSSSNIVNINKDSYKYDISLENCIDLGSTNTCMYNLNNIHNKDINNMPLEDCFSHIGSCPNEQNEHEDEINEDNKKDVTKQQKKRKLNSVSKKDMLIKKEMNADDNINCKENTLQNESPKKDDELRENDLKTTTENIKSNEVEDKEFVDKKKKRKLSVKVKVNVNVKVELQDTENDENKEKGIKKEKNDEEKKNDAEKKKKENKKGREKSVKVRKTKNQTQVERENEKENLMENVTNDKTSDIINNKTSDIINNKTSDIINNKTSDIINNKTSDIINNKTSDIINNKTSDIINDKTNDIINNKTSDCLSLVQNNKPVIHIDCNTSLDITDGYNNLISCEGRKKGKYNIEENNINDDNMFQYSDAFDSEGSIKYKEEYDKIYIPNNKNKINNINNFLIKNNLLLKSKFMRITPNTYLCRNCVLLYQNDFSYNTYEEEINKMERSILNEYEKGVIKKNEYVHDAIQNDKVVNTDENIMTNVLADKVDDMKIVEKLNCPLNVEEKGIEENILYVKREGDELINYGKHNDQMKEEEESEVVLGDVDFLKNEKKDNLILPYDEKYTGVNNNNSSIIMSLKKCDKNITKKKGKDKNFNNIKYFKIDNNKSLWYENYMYWMNKISLYNNLFFTNMYYKENVIKCIDMNNLFLNKMNIYKCSICCMLYHCSNMDRNNFFIKNEDKMRKKTKKNDCLKLLYICNLCTIKYDYVLKIITYKENNKCWNEFYTDNYYKNNFYELVYFIIKIIYKNIYINNFFNIFCSIMDNIFKEHKTLNMKLLSLFLFSNKYFKYEEFYHFFNNKMKKDDRVFKKTFHMKNVCFMPRYSKKSIMYYIFSLFCNKIYNINKKKKCIHNKRSYIHNKQSYIHNKRTDVMYDNNVYFHLYELARKKLYDYSEKSQKPFDEIINMCLYLLYLYYLCNVLYKCVRINNVLKGDKDKGDILCDNKKMKYYKKRKNIKLFLNIINSNEYINVNKIFHGKCIYELPFYVNKERIKKKRNSVREFINNNDNNQENNADKKKDHHIYNQNYNHNSYLCDIGKVDESLHSKEDNKKDVIITNNASIDSTSPSINMNKSVVSSIYSYNSNKEKKKNMRKCIKGLHHTIKNKLNLYVKLMLDKYIQESSNYIKNENKDIKKTIESKNKDDKICLLCNFSNYIYKGRLIPFYDIYIHSECLKWSLNCTQCCYEENKNKTIVNNDNGTKVDVNLDNADDIINNNNMNMLDNNMNGPIKNNEENNNNNDNNNNNNNNNNNNNNNNNNNNNNNNNNNNNNNNNNNNNNNNNNNNNNKSKKNTQKKKDHVNDVKINQNNSNNKNNKKKKTSKDNEELKSDNTKNNKTKDSDGNNNDKTKLEKINLIHNKQSNEISCKIDNNNIINDISTNNPYMKEKKCKNKEKNRGSKNNNIKNIKLIDMCEWKEDRNFYNIYENMIEVDEDNVKEIIFDSIKSTCFLCGYNNASVYCSNEDCNVKFHLNCAFYSTVIKDPSNNPFFRYLKCFNLVEFNKDTIFYKNMYHDPNVNNSVSSHVCTDNRYYKEMIEKNYVDIFPVHIIYKIKKIWCNKCWNKKKIYNLFYIQKCFMSPYYYDNIKTEESVPNKITPMKKDKSDITNEVKEEKDDDILYDSKVHKEYFTLRNILMDDNLLNNIIRNKKSCSMEIQENNDKMKGDNNIDNEDVRNVLCDGEERVSYNRNKLNDILLKMDMKDILKYFIDFYFENGSYYILDNILYSVNHCVKIKYKKKSLYNIQDVLNKETKIGTMMRELEGLISKYVNRSNDNNYMDRKYDMLLLKNIKSDINNDNNNDINNNDNNNNENNNENINDNNNNNNNNNNNNNNNNSNNNNNNNYYYYHNNEGKYNEQGSYQHIDIQNIINDKSVENLIKGYFILKNFLHIGNNNITLQNEDLLILKKSENSFVHNLYDNDKVYNVHVPYVYTKKMNTSYMNKKENDKKYNKSVNKNSCKSKNSILDNINFDKNKNKITKKYTAFIIDNNEYTTDCSNEENNTSDDEENENRKNENDDDNIPEHIKMNNIMNSQQKKENDFKNINLYFQLTNVIKKVSINKLEGNFFNYEEKGNLLGSNVSKIKMNELLECNVGEENFCDDDQKFSDNKNYASDDEEKKKKKRKNQTRFYNYPKRISTTNNNKNVNVLVNSLNNNLINKKEYFLNIIMNENNDLYMKKINEKYFPNYHPKKRKKKKLDNTSYINHNYNYNYPYNYNLLSNNSKSRILKVGCHNILNIGDILKYDGDKIIYPCGYLNMRIFYNLPSYYLFQIYKNANIDDINRKTKLLEKIFLQLRATYIFSITLREQNFFFSILLFPLINIDYFSESDATNFILAEGYNINEVYMKFLSLFNSQNYICDDMNNDYSHYNAKYGNIYKCLETYILKSVEHNKFIDSHTFFGLTLPCVVYQIKYKLFKYMYKHLSEKIKTYIKKSKDSVMKKRIKGCTREVVYNDNVLCKYSNLDTTIFKENEKENEKNIRKTVKYKYNINSAMSYRYLMNISSNLRLYVKKSSIHGYGLYTCEFINEGEPVIEYIGEYIRNIISDKREKYYDKIESSCYMFRLNENIIIDATKWGNVSRFINHSCEPNCFCKIVSCDQNLKHIVIFAKRDIAAHEEITYDYQFGVESEGKKLICLCGSSTCLGRMN.

Disordered regions lie at residues methionine 1 to glutamate 28, phenylalanine 418 to asparagine 458, aspartate 470 to serine 522, aspartate 736 to lysine 1024, phenylalanine 1487 to threonine 1545, and tyrosine 1557 to lysine 1642. Residues asparagine 435–methionine 449 are compositionally biased toward low complexity. Residues glutamine 475–valine 502 are compositionally biased toward basic and acidic residues. Basic residues predominate over residues lysine 504–asparagine 516. The span at glutamate 739–asparagine 794 shows a compositional bias: basic and acidic residues. Positions isoleucine 798 to asparagine 808 are enriched in acidic residues. Residues valine 809–aspartate 833 are compositionally biased toward low complexity. Basic and acidic residues-rich tracts occupy residues glutamate 853–leucine 866 and isoleucine 885–isoleucine 900. The span at arginine 912–cysteine 932 shows a compositional bias: low complexity. 2 stretches are compositionally biased toward basic and acidic residues: residues lysine 945–lysine 955 and threonine 964–threonine 975. Composition is skewed to basic residues over residues glutamate 1002–isoleucine 1019 and lysine 1492–isoleucine 1506. Over residues serine 1522–glutamate 1533 the composition is skewed to low complexity. The span at lysine 1566 to aspartate 1599 shows a compositional bias: basic and acidic residues. Residues glutamate 1615–valine 1632 are compositionally biased toward low complexity. 3 PHD-type zinc fingers span residues cysteine 1671 to cysteine 1728, lysine 1761 to glycine 1819, and lysine 2510 to cysteine 2579. The RING-type; degenerate zinc finger occupies cysteine 1764 to serine 1817. Positions cysteine 1816 to methionine 1919 constitute a Bromo domain. Positions glutamate 2694–asparagine 2705 are enriched in basic and acidic residues. 5 disordered regions span residues glutamate 2694–lysine 2768, glutamate 3053–asparagine 3072, asparagine 4182–threonine 4254, glutamate 4295–lysine 4349, and asparagine 5331–lysine 5460. Over residues asparagine 2720 to asparagine 2735 the composition is skewed to low complexity. The segment covering asparagine 2758–lysine 2768 has biased composition (basic and acidic residues). Positions asparagine 3057–asparagine 3072 are enriched in low complexity. Composition is skewed to basic and acidic residues over residues serine 4212 to asparagine 4223, serine 4239 to threonine 4254, and aspartate 4297 to lysine 4321. Basic residues predominate over residues lysine 4322–lysine 4338. 2 stretches are compositionally biased toward low complexity: residues asparagine 5331–asparagine 5340 and glutamate 5348–asparagine 5400. Residues lysine 5401 to aspartate 5411 show a composition bias toward basic residues. Residues valine 5416–lysine 5426 are compositionally biased toward low complexity. Residues serine 5434–lysine 5460 are compositionally biased toward basic and acidic residues. The C2HC pre-PHD-type; degenerate zinc finger occupies tyrosine 5496–asparagine 5532. The PHD-type 4; degenerate zinc finger occupies serine 5558 to valine 5610. Low complexity predominate over residues asparagine 5905–asparagine 5952. Disordered stretches follow at residues asparagine 5905–asparagine 5958, aspartate 6103–isoleucine 6133, and lysine 6212–threonine 6235. The span at glutamate 6118–isoleucine 6133 shows a compositional bias: basic and acidic residues. Residues leucine 6612–glutamine 6729 form the SET domain. One can recognise a Post-SET domain in the interval lysine 6737–asparagine 6753.

The protein belongs to the class V-like SAM-binding methyltransferase superfamily.

It catalyses the reaction L-lysyl-[histone] + S-adenosyl-L-methionine = N(6)-methyl-L-lysyl-[histone] + S-adenosyl-L-homocysteine + H(+). Probable histone methyltransferase. In Plasmodium falciparum (isolate 3D7), this protein is Putative histone-lysine N-methyltransferase 1 (SET1).